Reading from the N-terminus, the 508-residue chain is Octopamine receptor beta-1R (508 aa).

Topologically, residues 1–111 are extracellular; it reads MTLLQRLQAM…SHLALVFVKC (111 aa). Residues 112–132 form a helical membrane-spanning segment; it reads FIIGFIILAAILGNMLVIVSV. Residues 133–139 lie on the Cytoplasmic side of the membrane; that stretch reads MRHRKLR. Residues 140-160 form a helical membrane-spanning segment; it reads IITNYFVVSLAVADMLVALCA. The Extracellular portion of the chain corresponds to 161–186; the sequence is MTFNASVMISGKWMFGSVMCDMWNSF. Asparagine 164 carries N-linked (GlcNAc...) asparagine glycosylation. A helical transmembrane segment spans residues 187-209; sequence DVYFSTASIMHLCCISVDRYYAI. Topologically, residues 210–223 are cytoplasmic; sequence VQPLDYPLIMTQRR. A helical transmembrane segment spans residues 224–244; that stretch reads VFIMLLMVWLSPALLSFLPIC. Topologically, residues 245 to 270 are extracellular; sequence SGWYTTTENYKYLKSNPHICEFKVNK. The chain crosses the membrane as a helical span at residues 271–291; sequence AYAIVSSSMSFWIPGIVMLSM. Residues 292–351 are Cytoplasmic-facing; sequence YYRIYQEADRQERLVYRSKVAALLLEKHLQISQIPKPRPSIQVEQSTISTMRRERKAART. The helical transmembrane segment at 352–372 threads the bilayer; the sequence is LGIIMSAFLICWLPFFLWYIV. At 373–383 the chain is on the extracellular side; it reads SSLCDSCITPR. The helical transmembrane segment at 384–404 threads the bilayer; that stretch reads LLVGILFWIGYFNSALNPIIY. The Cytoplasmic portion of the chain corresponds to 405–508; sequence AYFNRDFRAA…MQQLHPLYTN (104 aa). The interval 440–464 is disordered; it reads RDLEFGGPSRRGTNGAQRTGSGSAE. Polar residues predominate over residues 450-461; the sequence is RGTNGAQRTGSG.

The protein belongs to the G-protein coupled receptor 1 family. In terms of tissue distribution, in the adult, expressed in the superior protocerebrum and the optic lobe medulla of the central nervous system, nurse cells of egg chambers in the ovary at oogenic stages 1-10, and spermatogonia and spermatocytes in the testis. Expressed in embryonic and larval ventral nerve cord and brain lobe, and the larval imaginal disk and larval salivary gland. Also expressed in larval synaptic boutons and retinal cells in the optic disk.

It localises to the cell membrane. In terms of biological role, autoreceptor for octopamine, which is a neurotransmitter, neurohormone, and neuromodulator in invertebrates. Negatively regulates synaptic growth by activating the inhibitory G protein Galphao and limiting cAMP production. Antagonizes the action of Octbeta2R which stimulates synaptic growth. This Drosophila melanogaster (Fruit fly) protein is Octopamine receptor beta-1R.